A 131-amino-acid chain; its full sequence is Large ribosomal subunit protein bL17 (131 aa).

This sequence belongs to the bacterial ribosomal protein bL17 family. As to quaternary structure, part of the 50S ribosomal subunit. Contacts protein L32.

The chain is Large ribosomal subunit protein bL17 from Shewanella amazonensis (strain ATCC BAA-1098 / SB2B).